The sequence spans 147 residues: UPF0208 membrane protein SO_2914 (147 aa).

A run of 2 helical transmembrane segments spans residues 40–60 (LAIL…LYTY) and 68–88 (ALTI…WLGW).

It belongs to the UPF0208 family.

Its subcellular location is the cell inner membrane. This Shewanella oneidensis (strain ATCC 700550 / JCM 31522 / CIP 106686 / LMG 19005 / NCIMB 14063 / MR-1) protein is UPF0208 membrane protein SO_2914.